The sequence spans 135 residues: Succinate dehydrogenase assembly factor 3, mitochondrial (135 aa).

The N-terminal 12 residues, 1–12, are a transit peptide targeting the mitochondrion; that stretch reads MRIFTRLLYAAP.

It belongs to the complex I LYR family. SDHAF3 subfamily. Interacts with the iron-sulfur protein subunit within the SDH catalytic dimer.

The protein localises to the mitochondrion matrix. Functionally, plays an essential role in the assembly of succinate dehydrogenase (SDH), an enzyme complex (also referred to as respiratory complex II) that is a component of both the tricarboxylic acid (TCA) cycle and the mitochondrial electron transport chain, and which couples the oxidation of succinate to fumarate with the reduction of ubiquinone (coenzyme Q) to ubiquinol. Promotes maturation of the iron-sulfur protein subunit of the SDH catalytic dimer, protecting it from the deleterious effects of oxidants. May act together with SDHAF1. In Emericella nidulans (strain FGSC A4 / ATCC 38163 / CBS 112.46 / NRRL 194 / M139) (Aspergillus nidulans), this protein is Succinate dehydrogenase assembly factor 3, mitochondrial.